The primary structure comprises 345 residues: Telomere-binding protein cav (345 aa).

A required for binding to Su(var)205 region spans residues 115–337 (RRKMVQPYPE…TITFQNTESE (223 aa)). Disordered regions lie at residues 145–180 (RLDR…HEDQ) and 200–231 (PPGV…INRP). 2 short sequence motifs (su(var)205-binding Pro-containing repeat) span residues 231-237 (PETEINE) and 298-304 (PETEMNE).

In terms of assembly, component of the HipHop-HOAP telomere capping complex, composed of at least HipHop and cav/HOAP, and may include Su(var)205/HP1; HipHop and cav/HOAP, but not Su(var)205, are interdependent for their protein stability. Interacts with HipHop (via N-terminus). Interacts (via C-terminus) with Su(var)205/HP1 dimer (via hinge and chromoshadow domain) and Orc1; possibly interacts with other components of the origin recognition complex (ORC). Each molecule of cav/HOAP interacts with 2 molecules of Su(var)205/HP1. The HipHop-HOAP complex recruits the MTV complex, consisting of moi/modigliani, tea and ver/verrocchio, to telomeres, forming the terminin telomere-capping complex. Interacts with moi/modigliani; the interaction is direct. Interacts with ver/verrochio; the interaction is direct. Interacts with HP6, which is also part of the terminin complex. Interacts (via N-terminus) with peo/pendolino (via N-terminus); the interaction is direct.

The protein localises to the nucleus. The protein resides in the chromosome. It is found in the telomere. In terms of biological role, part of the HipHop-HOAP complex that recruits the MTV complex to form the terminin telomere-capping complex, which binds to chromosome ends in a sequence-independent manner and prevents telomere fusion. Telomere capping is independent of the origin recognition complex (ORC). In Drosophila melanogaster (Fruit fly), this protein is Telomere-binding protein cav.